Here is a 222-residue protein sequence, read N- to C-terminus: Large ribosomal subunit protein uL4 (222 aa).

The protein belongs to the universal ribosomal protein uL4 family. In terms of assembly, part of the 50S ribosomal subunit.

In terms of biological role, one of the primary rRNA binding proteins, this protein initially binds near the 5'-end of the 23S rRNA. It is important during the early stages of 50S assembly. It makes multiple contacts with different domains of the 23S rRNA in the assembled 50S subunit and ribosome. Functionally, forms part of the polypeptide exit tunnel. The protein is Large ribosomal subunit protein uL4 of Acidobacterium capsulatum (strain ATCC 51196 / DSM 11244 / BCRC 80197 / JCM 7670 / NBRC 15755 / NCIMB 13165 / 161).